A 334-amino-acid chain; its full sequence is Amino acid--[acyl-carrier-protein] ligase 2 (334 aa).

Residue Cys-131 coordinates Zn(2+). Residues Arg-159, Glu-161, and 168–169 (RL) contribute to the ATP site. Glu-176 is a binding site for Zn(2+). Glu-176 is an an L-alpha-amino acid binding site. Residues Lys-235 and 250 to 253 (ACMS) contribute to the ATP site. Cys-279 contributes to the Zn(2+) binding site. Residue Arg-286 participates in ATP binding.

It belongs to the class-II aminoacyl-tRNA synthetase family. Amino acid--[acyl-carrier-protein] ligase subfamily. Homodimer. The cofactor is Zn(2+).

It carries out the reaction an L-alpha-amino acid + holo-[ACP] + ATP = an L-alpha-aminoacyl-[ACP] + AMP + diphosphate. In terms of biological role, catalyzes the ATP-dependent activation of L-glycine and its transfer to the phosphopantetheine prosthetic group covalently attached to the vicinal carrier protein blr6284 of yet unknown function. May participate in nonribosomal peptide synthesis or related processes. L-alanine is a poor substrate whereas L-serine or D-amino acids are not substrates for ATP-dependent activation. Does not display tRNA aminoacylation activity. This Bradyrhizobium diazoefficiens (strain JCM 10833 / BCRC 13528 / IAM 13628 / NBRC 14792 / USDA 110) protein is Amino acid--[acyl-carrier-protein] ligase 2.